Here is a 524-residue protein sequence, read N- to C-terminus: MVKLSNLLVATFGVLLVLNGCLARQSLGVPPQLQNECNLDNLDVLQATETIKSEAGQIEYWDHNHPQLRCVGVSVARYVIEQGGLYLPTFFTSPKISYVVQGTGISGRVVPGCAETFMDSQPMQGQQQGQPWQGRQGQQGQPWEGQGQQGQQGRQGQPWEGQGQQGQQGRQGQQGQPWEGQGQQGQQGFRDMHQKVEHVRRGDVFANTPGSAHWIYNSGEQPLVIIALLDIANYQNQLDRNPRVFHLAGNNQQGGFGGSQQQQEQKNLWSGFDAQVIAQALKIDVQLAQQLQNQQDSRGNIVRVKGPFQVVRPPLRQPYESEEWRHPRSPQGNGLEETICSMRSHENIDDPARADVYKPSLGRVTSVNSYTLPILEYVRLSATRGVLQGNAMVLPKYNMNANEILYCTGGQGRIQVVNDNGQNVLDQQVQKGQLVVIPQGFAYVVQSHGNKFEWISFKTNENAMISTLAGRTSLLRALPLEVISNGFQISPEEARKIKFNTLETTLTRAAGRQQQQLIEEIVEA.

Residues 1–23 (MVKLSNLLVATFGVLLVLNGCLA) form the signal peptide. An intrachain disulfide couples Cys-37 to Cys-70. 2 consecutive Cupin type-1 domains span residues 42–289 (LDVL…QLAQ) and 346–495 (ENID…EEAR). The residue at position 53 (Ser-53) is a Phosphoserine. The residue at position 78 (Tyr-78) is a Phosphotyrosine. The residue at position 97 (Ser-97) is a Phosphoserine. The cysteines at positions 113 and 340 are disulfide-linked. Thr-116 is modified (phosphothreonine). Residues 119–190 (DSQPMQGQQQ…QGQQGQQGFR (72 aa)) form a disordered region. The span at 124–188 (QGQQQGQPWQ…EGQGQQGQQG (65 aa)) shows a compositional bias: low complexity. Residues Ser-259 and Ser-366 each carry the phosphoserine modification. Position 459 is a phosphothreonine (Thr-459). Residue Ser-484 is modified to Phosphoserine. Thr-501 is modified (phosphothreonine).

The protein belongs to the 11S seed storage protein (globulins) family. In terms of assembly, hexamer; each subunit is composed of an acidic and a basic chain derived from a single precursor and linked by a disulfide bond. Proteolytically processed during seed maturation at a conserved Asn-Gly peptide bond by an asparaginyl endopeptidase to produce two mature polypeptides referred to as alpha and beta subunits that are joined together by a disulfide bond. Post-translationally, phosphorylated in seeds on some Tyr residues in response to abscisic acid (ABA). In terms of tissue distribution, accumulates in seeds 8 days after anthesis.

Its subcellular location is the protein storage vacuole. Functionally, seed storage protein. The sequence is that of 12S seed storage protein CRC (CRC) from Arabidopsis thaliana (Mouse-ear cress).